Reading from the N-terminus, the 385-residue chain is MALRKKNSLLNMANSYVLDSPQPSNLNYFWNFGSLLALCLVIQLATGITLAMHYTSHASLAFDSVEHIMRDVNFGWFIRYAHANTASFFFICIYAHMGRNIYYGSYKTPRVLPWSIGVIIFLLLIITAFMGYVLVFGQMSLWGATVICNLVSAIPWLGEDIVHFLWGGFSVGNPTLQRFFALHYLMPFVLAVFALLHLIALHTAGSSNPLGITSNVDKLSMHPYYSFKDLITVFAFLLMFTLFVFFSPDKLGHPDNYIPANPMVTPASIVPEWYLLPFYAILRAIPDKLGGVIAMVAAILILLILPIVDRSIIRGNAFKPISKLLFGFFICNFLLLGVLGQVHIEPPFIVLGQICTIFYFSYFLILLPMVSTIENIFFYIGSLRK.

4 helical membrane passes run 32 to 52 (FGSL…TLAM), 76 to 98 (WFIR…AHMG), 113 to 133 (PWSI…MGYV), and 179 to 199 (FFAL…LHLI). The heme b site is built by His-82 and His-96. Heme b contacts are provided by His-183 and His-197. His-202 serves as a coordination point for a ubiquinone. Helical transmembrane passes span 225-245 (YSFK…LFVF), 289-309 (LGGV…PIVD), 321-341 (ISKL…VLGQ), and 348-368 (FIVL…ILLP).

It belongs to the cytochrome b family. As to quaternary structure, fungal cytochrome b-c1 complex contains 10 subunits; 3 respiratory subunits, 2 core proteins and 5 low-molecular weight proteins. Cytochrome b-c1 complex is a homodimer. It depends on heme b as a cofactor.

It is found in the mitochondrion inner membrane. Component of the ubiquinol-cytochrome c reductase complex (complex III or cytochrome b-c1 complex) that is part of the mitochondrial respiratory chain. The b-c1 complex mediates electron transfer from ubiquinol to cytochrome c. Contributes to the generation of a proton gradient across the mitochondrial membrane that is then used for ATP synthesis. The sequence is that of Cytochrome b (COB) from Yarrowia lipolytica (strain CLIB 122 / E 150) (Yeast).